A 103-amino-acid chain; its full sequence is Nucleoid-associated protein A2cp1_3777 (103 aa).

Belongs to the YbaB/EbfC family. As to quaternary structure, homodimer.

Its subcellular location is the cytoplasm. The protein localises to the nucleoid. Its function is as follows. Binds to DNA and alters its conformation. May be involved in regulation of gene expression, nucleoid organization and DNA protection. The polypeptide is Nucleoid-associated protein A2cp1_3777 (Anaeromyxobacter dehalogenans (strain 2CP-1 / ATCC BAA-258)).